We begin with the raw amino-acid sequence, 338 residues long: Ornithine carbamoyltransferase, catabolic (338 aa).

Carbamoyl phosphate-binding positions include 58-61 (STRT), Q85, R109, and 136-139 (HPTQ). L-ornithine-binding positions include N168, D232, and 236 to 237 (SM). Residues 273 to 274 (CL) and R318 each bind carbamoyl phosphate.

This sequence belongs to the aspartate/ornithine carbamoyltransferase superfamily. OTCase family.

It is found in the cytoplasm. The catalysed reaction is carbamoyl phosphate + L-ornithine = L-citrulline + phosphate + H(+). It participates in amino-acid degradation; L-arginine degradation via ADI pathway; carbamoyl phosphate from L-arginine: step 2/2. Reversibly catalyzes the transfer of the carbamoyl group from carbamoyl phosphate (CP) to the N(epsilon) atom of ornithine (ORN) to produce L-citrulline. This chain is Ornithine carbamoyltransferase, catabolic, found in Streptococcus pneumoniae serotype 4 (strain ATCC BAA-334 / TIGR4).